Here is a 370-residue protein sequence, read N- to C-terminus: Gap junction delta-4 protein (370 aa).

Residues M1–T19 lie on the Cytoplasmic side of the membrane. Residues M20–A40 form a helical membrane-spanning segment. At G41–R76 the chain is on the extracellular side. The helical transmembrane segment at F77–L97 threads the bilayer. Over H98–H146 the chain is Cytoplasmic. The helical transmembrane segment at L147 to F167 threads the bilayer. Topologically, residues L168–L196 are extracellular. The chain crosses the membrane as a helical span at residues L197–V217. At C218–V370 the chain is on the cytoplasmic side. The tract at residues R227–V370 is disordered. Positions P246–E260 are enriched in basic and acidic residues. A compositionally biased stretch (low complexity) spans P331–S345.

Belongs to the connexin family. Delta-type subfamily. As to quaternary structure, a connexon is composed of a hexamer of connexins.

It is found in the cell membrane. It localises to the cell junction. Its subcellular location is the gap junction. Functionally, one gap junction consists of a cluster of closely packed pairs of transmembrane channels, the connexons, through which materials of low MW diffuse from one cell to a neighboring cell. The polypeptide is Gap junction delta-4 protein (GJD4) (Macaca fascicularis (Crab-eating macaque)).